Reading from the N-terminus, the 212-residue chain is Protein ERP5 (212 aa).

The first 20 residues, 1-20 (MKYNIVHGICLLFAITQAVG), serve as a signal peptide directing secretion. At 21–178 (AVHFYAKSGE…FRNQSESANS (158 aa)) the chain is on the lumenal side. The region spanning 31–124 (TKCFYEHLSR…TLRVFIELEI (94 aa)) is the GOLD domain. N-linked (GlcNAc...) asparagine glycosylation occurs at N171. Residues 179-199 (KIMTWSVFQLLILLGTCAFQL) traverse the membrane as a helical segment. Over 200–212 (RYLKNFFVKQKVV) the chain is Cytoplasmic.

The protein belongs to the EMP24/GP25L family.

The protein resides in the endoplasmic reticulum membrane. Functionally, involved in vesicular protein trafficking. In Saccharomyces cerevisiae (strain ATCC 204508 / S288c) (Baker's yeast), this protein is Protein ERP5 (ERP5).